The chain runs to 2430 residues: DNA-directed RNA polymerase subunit beta'' (2430 aa).

C336, C455, C462, and C465 together coordinate Zn(2+).

Belongs to the RNA polymerase beta' chain family. RpoC2 subfamily. In plastids the minimal PEP RNA polymerase catalytic core is composed of four subunits: alpha, beta, beta', and beta''. When a (nuclear-encoded) sigma factor is associated with the core the holoenzyme is formed, which can initiate transcription. Requires Zn(2+) as cofactor.

Its subcellular location is the plastid. It is found in the chloroplast. The catalysed reaction is RNA(n) + a ribonucleoside 5'-triphosphate = RNA(n+1) + diphosphate. In terms of biological role, DNA-dependent RNA polymerase catalyzes the transcription of DNA into RNA using the four ribonucleoside triphosphates as substrates. The protein is DNA-directed RNA polymerase subunit beta'' of Stigeoclonium helveticum (Green alga).